The primary structure comprises 361 residues: Probable S-adenosylmethionine-dependent methyltransferase At5g38780 (361 aa).

S-adenosyl-L-homocysteine is bound by residues Tyr-19, Cys-64, Asn-69, Asp-106, Leu-107, Ser-135, and Phe-136. The Mg(2+) site is built by Asn-174, Glu-260, Phe-262, and Asn-263.

The protein belongs to the methyltransferase superfamily. Type-7 methyltransferase family. As to quaternary structure, homodimer. The cofactor is Mg(2+).

In Arabidopsis thaliana (Mouse-ear cress), this protein is Probable S-adenosylmethionine-dependent methyltransferase At5g38780.